The primary structure comprises 618 residues: Putative UDP-glucuronate:xylan alpha-glucuronosyltransferase 3 (618 aa).

The chain crosses the membrane as a helical; Signal-anchor for type II membrane protein span at residues 32 to 54; that stretch reads GVKFNTLKLVLICIMLGALFTIY. Residues aspartate 379 and aspartate 381 each coordinate Mn(2+). Substrate is bound by residues 379–381, 408–410, 435–439, and 489–495; these read DAD, NSG, NGGDQ, and HYLGYNK. Histidine 489 serves as a coordination point for Mn(2+). Positions 598–608 are enriched in low complexity; it reads TNNSSTTTTSS. The interval 598–618 is disordered; the sequence is TNNSSTTTTSSPPHKTALPSL.

Belongs to the glycosyltransferase 8 family. Glycogenin subfamily. The cofactor is Mn(2+).

It localises to the golgi apparatus membrane. Functionally, may be involved in the substitutions of the xylan backbone in stem glucuronoxylan. The protein is Putative UDP-glucuronate:xylan alpha-glucuronosyltransferase 3 (GUX3) of Arabidopsis thaliana (Mouse-ear cress).